Here is a 316-residue protein sequence, read N- to C-terminus: Glutathione synthetase (316 aa).

The ATP-grasp domain occupies 123 to 309 (NEKISTLSFK…ISGILLDSIE (187 aa)). 149–206 (FQEKFGDIILKPINKMGGDSVFYVKKNDPNVSVIIDQLTNYGNSFCLIQEYIKEILNG) is an ATP binding site. Residues Glu280 and Asn282 each contribute to the Mg(2+) site.

This sequence belongs to the prokaryotic GSH synthase family. Requires Mg(2+) as cofactor. It depends on Mn(2+) as a cofactor.

It catalyses the reaction gamma-L-glutamyl-L-cysteine + glycine + ATP = glutathione + ADP + phosphate + H(+). The protein operates within sulfur metabolism; glutathione biosynthesis; glutathione from L-cysteine and L-glutamate: step 2/2. In Wigglesworthia glossinidia brevipalpis, this protein is Glutathione synthetase.